A 497-amino-acid chain; its full sequence is Angiopoietin-1 (497 aa).

The N-terminal stretch at 1-15 (MTVFLSFAFLAAILT) is a signal peptide. N92, N122, N154, N243, and N294 each carry an N-linked (GlcNAc...) asparagine glycan. Residues 153–261 (LNQTSRLEIQ…LELMDTVHNL (109 aa)) are a coiled coil. The 221-residue stretch at 276-496 (KEEEKPFRDC…STTMMIRPLD (221 aa)) folds into the Fibrinogen C-terminal domain. Disulfide bonds link C285–C314 and C438–C451.

Homooligomer. Interacts with TEK/TIE2. Interacts with SVEP1/polydom. Interacts with THBD; this interaction significantly inhibits the generation of activated PC and TAFIa/CPB2 by the thrombin/thrombomodulin complex.

It localises to the secreted. Binds and activates TIE2 receptor by inducing its tyrosine phosphorylation. Implicated in endothelial developmental processes later and distinct from that of VEGF. Appears to play a crucial role in mediating reciprocal interactions between the endothelium and surrounding matrix and mesenchyme. Mediates blood vessel maturation/stability. It may play an important role in the heart early development. This Bos taurus (Bovine) protein is Angiopoietin-1 (ANGPT1).